The primary structure comprises 170 residues: uncharacterized protein (170 aa).

The 148-residue stretch at 1–148 (MVKSQKVIDV…TIHDFFENAT (148 aa)) folds into the Ferritin-like diiron domain.

This is an uncharacterized protein from Ureaplasma parvum serovar 3 (strain ATCC 700970).